Reading from the N-terminus, the 182-residue chain is Large ribosomal subunit protein uL5 (182 aa).

The protein belongs to the universal ribosomal protein uL5 family. As to quaternary structure, part of the 50S ribosomal subunit; part of the 5S rRNA/L5/L18/L25 subcomplex. Contacts the 5S rRNA and the P site tRNA. Forms a bridge to the 30S subunit in the 70S ribosome.

This is one of the proteins that bind and probably mediate the attachment of the 5S RNA into the large ribosomal subunit, where it forms part of the central protuberance. In the 70S ribosome it contacts protein S13 of the 30S subunit (bridge B1b), connecting the 2 subunits; this bridge is implicated in subunit movement. Contacts the P site tRNA; the 5S rRNA and some of its associated proteins might help stabilize positioning of ribosome-bound tRNAs. The chain is Large ribosomal subunit protein uL5 from Borrelia hermsii (strain HS1 / DAH).